Here is a 359-residue protein sequence, read N- to C-terminus: 3-dehydroquinate synthase (359 aa).

NAD(+) is bound by residues 71 to 76, 105 to 109, 129 to 130, lysine 142, and lysine 151; these read DGEAYK, GVIGD, and TT. The Zn(2+) site is built by glutamate 184, histidine 247, and histidine 264.

This sequence belongs to the sugar phosphate cyclases superfamily. Dehydroquinate synthase family. It depends on Co(2+) as a cofactor. Zn(2+) is required as a cofactor. NAD(+) serves as cofactor.

Its subcellular location is the cytoplasm. It carries out the reaction 7-phospho-2-dehydro-3-deoxy-D-arabino-heptonate = 3-dehydroquinate + phosphate. The protein operates within metabolic intermediate biosynthesis; chorismate biosynthesis; chorismate from D-erythrose 4-phosphate and phosphoenolpyruvate: step 2/7. Catalyzes the conversion of 3-deoxy-D-arabino-heptulosonate 7-phosphate (DAHP) to dehydroquinate (DHQ). This Burkholderia mallei (strain NCTC 10247) protein is 3-dehydroquinate synthase.